The sequence spans 285 residues: K88 fimbrial protein AB (285 aa).

An N-terminal signal peptide occupies residues 1–21 (MKKTLIALAIAASAASGMAHA).

Belongs to the fimbrial K88 protein family. As to quaternary structure, K88 fimbria, 0.1-1 micrometer in length and 7 nanometers in diameter, is composed of about 100 identical subunits.

The protein resides in the fimbrium. In terms of biological role, K88 major fimbrial subunit. Fimbriae (also called pili), are polar filaments radiating from the surface of the bacterium to a length of 0.5-1.5 micrometers and numbering 100-300 per cell. They enable bacteria to colonize the epithelium of specific host organs. The sequence is that of K88 fimbrial protein AB (faeG) from Escherichia coli.